The chain runs to 229 residues: Ferric nitrobindin-like protein (229 aa).

The segment at 1–54 (MSENSTPNNPVVPGAGADGPSLSDSASISGSDAVNLAAEQSKSTAHRNIPGLGD) is disordered. Residues 18 to 33 (DGPSLSDSASISGSDA) show a composition bias toward low complexity. The GXWXGXG signature appears at 82 to 88 (GVWRGEG).

It belongs to the nitrobindin family.

The polypeptide is Ferric nitrobindin-like protein (Corynebacterium glutamicum (strain R)).